The primary structure comprises 124 residues: Small ribosomal subunit protein uS12 (124 aa).

The segment at 1-23 (MATINQLVRKPRVRQKQKSNVPA) is disordered. D89 bears the 3-methylthioaspartic acid mark. The disordered stretch occupies residues 103–124 (DTAGVGDRRQGRSKYGAKRPKG). Basic residues predominate over residues 113–124 (GRSKYGAKRPKG).

This sequence belongs to the universal ribosomal protein uS12 family. Part of the 30S ribosomal subunit. Contacts proteins S8 and S17. May interact with IF1 in the 30S initiation complex.

In terms of biological role, with S4 and S5 plays an important role in translational accuracy. Functionally, interacts with and stabilizes bases of the 16S rRNA that are involved in tRNA selection in the A site and with the mRNA backbone. Located at the interface of the 30S and 50S subunits, it traverses the body of the 30S subunit contacting proteins on the other side and probably holding the rRNA structure together. The combined cluster of proteins S8, S12 and S17 appears to hold together the shoulder and platform of the 30S subunit. This is Small ribosomal subunit protein uS12 from Nitrosococcus oceani (strain ATCC 19707 / BCRC 17464 / JCM 30415 / NCIMB 11848 / C-107).